We begin with the raw amino-acid sequence, 225 residues long: Cytidylate kinase (225 aa).

11-19 provides a ligand contact to ATP; that stretch reads GPAAAGKST.

Belongs to the cytidylate kinase family. Type 1 subfamily.

The protein localises to the cytoplasm. It catalyses the reaction CMP + ATP = CDP + ADP. The catalysed reaction is dCMP + ATP = dCDP + ADP. In Bacillus cereus (strain G9842), this protein is Cytidylate kinase.